A 267-amino-acid polypeptide reads, in one-letter code: UPF0328 protein ECU06_0070 (267 aa).

Belongs to the UPF0328 family.

The sequence is that of UPF0328 protein ECU06_0070 from Encephalitozoon cuniculi (strain GB-M1) (Microsporidian parasite).